Reading from the N-terminus, the 212-residue chain is 2-hydroxychromene-2-carboxylate isomerase (212 aa).

S24 (nucleophile) is an active-site residue. S24 lines the glutathione pocket. Substrate-binding positions include K56, 66–67, and Y97; that span reads NR. Glutathione contacts are provided by residues V181 and 192–195; that span reads WGND.

The protein belongs to the GST superfamily. NadH family. Glutathione is required as a cofactor.

It catalyses the reaction 2-hydroxychromene-2-carboxylate = (3E)-4-(2-hydroxyphenyl)-2-oxobut-3-enoate. Its pathway is aromatic compound metabolism; naphthalene degradation. Functionally, involved in the naphthalene catabolic pathway. Catalyzes the reversible glutathione-dependent isomerization of 2-hydroxychromene-2-carboxylate (HCCA) to trans-O-hydroxybenzylidenepyruvate (THBPA). The sequence is that of 2-hydroxychromene-2-carboxylate isomerase (doxJ) from Pseudomonas sp. (strain C18).